A 297-amino-acid chain; its full sequence is MASYSFQFSTDATGKPGAAKPYREGNRDFVVPVASISGNSELLTNAVLKATEVYTQYGQDRLGQVLISKVKGHAYSDREGTLFIEESNDMNSWTTISSLVVKANTLGETEWIHLTKRYFRFRYANGNLQQSEFLLYQSLGAGEEDININHTVPITAVAPFSVQLDKSGLTNDGRLKVQTEGLNLSSLDTQSKTMDIVFHDKTETIGEGNPFTVGSFKTLLIEVYGTAETSELKFWGKSLSGTKRALRGQKVDDGTFATSTKGKSEAWSFSITGFKEIVMELTALTNGNFSVRGTAVS.

Positions 1-12 (MASYSFQFSTDA) are enriched in polar residues. The tract at residues 1–21 (MASYSFQFSTDATGKPGAAKP) is disordered.

This sequence to B.subtilis XkdY/XepA.

This is an uncharacterized protein from Bacillus subtilis (strain 168).